Consider the following 429-residue polypeptide: MAATDLERVSNAEPEPRSLSLGGHVGFDSLPDQLVSKSVTQGFSFNILCVGETGIGKSTLMNTLFNTTFETEEASHHEECVRLRPQTYDLQESNVHLKLTIVDAVGFGDQINKDDSYRPIVDYIDAQFENYLQEELKIRRSLFDYHDTRIHVCLYFITPTGHSLKSLDLVTMKKLDSKVNIIPIIAKADTISKSELHKFKIKIMGELVSNGVQIYQFPTDDEAVAEINAVMNAHLPFAVVGSTEEVKVGNKLVRARQYPWGVVQVENENHCDFVKLREMLIRVNMEDLREQTHSRHYELYRRCKLEEMGFQDSDGDSQPFSLQETYEAKRKEFLSELQRKEEEMRQMFVNKVKETELELKEKERELHEKFEHLKRIHQEEKRKVEEKRRELEEETNAFNCRKAAMEALQSQALHATSQQPLRKDKDKKN.

Over residues 1–16 (MAATDLERVSNAEPEP) the composition is skewed to basic and acidic residues. The interval 1–23 (MAATDLERVSNAEPEPRSLSLGG) is disordered. An N-acetylalanine modification is found at Ala2. Ser10 bears the Phosphoserine mark. The region spanning 41-307 (QGFSFNILCV…ELYRRCKLEE (267 aa)) is the Septin-type G domain. The G1 motif stretch occupies residues 51-58 (GETGIGKS). Residues 51–58 (GETGIGKS), Gly106, 187–195 (KADTISKSE), Gly241, and Arg256 each bind GTP. The interval 103-106 (DAVG) is G3 motif. Residues 186–189 (AKAD) are G4 motif. Positions 320-412 (FSLQETYEAK…AAMEALQSQA (93 aa)) form a coiled coil. The span at 409–420 (QSQALHATSQQP) shows a compositional bias: polar residues. Residues 409-429 (QSQALHATSQQPLRKDKDKKN) are disordered.

It belongs to the TRAFAC class TrmE-Era-EngA-EngB-Septin-like GTPase superfamily. Septin GTPase family. Septins polymerize into heterooligomeric protein complexes that form filaments, and can associate with cellular membranes, actin filaments and microtubules. GTPase activity is required for filament formation. Interacts with SEPTIN5. Interacts with CDK14, SEPTIN4 and SEPTIN7. Interacts with VAMP2; the interaction inhibits interaction of VAMP2 with SYP. Interacts with STX1A.

It localises to the cytoplasm. The protein resides in the cytoskeleton. Its subcellular location is the synapse. The protein localises to the cell projection. It is found in the axon. It localises to the cytoplasmic vesicle. The protein resides in the secretory vesicle. Its subcellular location is the synaptic vesicle membrane. The protein localises to the presynapse. Its function is as follows. Filament-forming cytoskeletal GTPase. May play a role in platelet secretion. Seems to participate in the process of SNARE complex formation in synaptic vesicles. This chain is Septin-8, found in Mus musculus (Mouse).